The chain runs to 635 residues: MLNRVQILMKTANNYETIEILRNYLRLYIILARNEEGRGILIYDDNIDSIMSMMNITRLEVIGLTTHCTKLRSSPPIPMSRLFMDEIDHESYYSPKTSDYPLIDIIRKRSHEQGDIALALEQYGIENTDSISEINEWLSSKGLACYRFVKFNDYRKQMYRKFSRCTIVDSMIIGHIGHHYIWIKNLETYTRPEIDVLPFDIKYISRDELWARISSSLDQTHIKTIAVSVYGAITDNGPMPYMISTYPGNTFVNFNSVKNLILNFLDWIKDIMTSTRTIILVGYMSNLFDIPLLTVYWPNNCGWKIYNNTLISSDGARVIWMDAYKFSCGLSLQDYCYHWGSKPESRPFDLIKKSDAKRNSKSLVKESMASLKSLYEAFETQSGALEVLMSPCRMFSFSRIEDMFLTSVINRVSENTGMGMYYPTNDIPSLFIESSICLDYIIVNNQESNKYRIKSVLDIISSKQYPAGRPNYVKNGTKGKLYIALCKVTVPTNDHIPVVYHDDDNTTTFITVLTSVDIETAIRAGYSIVELGALQWDDNIPELKHGLLDSIKMIYDLNAVTTNNLLEQLIENINFNNSSIISLFYTFAISYCRAFIYSIMETIDPVYISQFSYKELYVSSSYKDINESMSQMVKL.

It belongs to the orthopoxvirus OPG056 family. Interacts with protein OPG164/A36. Interacts with protein OPG064/E2.

It is found in the virion membrane. It localises to the host endosome. Plays a role in intracellular enveloped virus (IEV) transport to the cell surface through microtubule transport. Together with protein OPG064/E2, forms a complex that interacts with host KLC2 (kinesin light chain isoform 2) to engage the kinesin-1 complex and thereby promote IEV trafficking. This is Protein OPG056 (OPG056) from Vaccinia virus (strain Western Reserve) (VACV).